The following is a 114-amino-acid chain: Hemerythrin (114 aa).

Fe cation contacts are provided by His-26, His-55, Glu-59, His-74, His-78, His-102, and Asp-107.

Belongs to the hemerythrin family. Homooctamer.

Functionally, hemerythrin is a respiratory protein in blood cells of certain marine worms. The oxygen-binding site in each chain contains two iron atoms. This chain is Hemerythrin, found in Phascolopsis gouldii (Peanut worm).